Reading from the N-terminus, the 434-residue chain is 3-phosphoshikimate 1-carboxyvinyltransferase (434 aa).

Residues lysine 15, serine 16, and arginine 20 each coordinate 3-phosphoshikimate. Lysine 15 lines the phosphoenolpyruvate pocket. Residues glycine 96 and arginine 124 each contribute to the phosphoenolpyruvate site. The 3-phosphoshikimate site is built by serine 169, glutamine 171, serine 195, aspartate 319, and lysine 346. Glutamine 171 provides a ligand contact to phosphoenolpyruvate. The Proton acceptor role is filled by aspartate 319. Positions 350 and 394 each coordinate phosphoenolpyruvate.

It belongs to the EPSP synthase family. In terms of assembly, monomer.

The protein localises to the cytoplasm. It carries out the reaction 3-phosphoshikimate + phosphoenolpyruvate = 5-O-(1-carboxyvinyl)-3-phosphoshikimate + phosphate. It participates in metabolic intermediate biosynthesis; chorismate biosynthesis; chorismate from D-erythrose 4-phosphate and phosphoenolpyruvate: step 6/7. Catalyzes the transfer of the enolpyruvyl moiety of phosphoenolpyruvate (PEP) to the 5-hydroxyl of shikimate-3-phosphate (S3P) to produce enolpyruvyl shikimate-3-phosphate and inorganic phosphate. The protein is 3-phosphoshikimate 1-carboxyvinyltransferase of Chlorobium phaeobacteroides (strain DSM 266 / SMG 266 / 2430).